Consider the following 428-residue polypeptide: Adenylosuccinate synthetase (428 aa).

GTP is bound by residues 12 to 18 (GDEGKGK) and 40 to 42 (GHT). D13 (proton acceptor) is an active-site residue. Mg(2+) contacts are provided by D13 and G40. Residues 13 to 16 (DEGK), 38 to 41 (NAGH), T129, R143, Q224, T239, and R303 each bind IMP. Residue H41 is the Proton donor of the active site. 299–305 (VTTGRIR) contacts substrate. Residues R305, 331–333 (KVD), and 410–412 (AYG) each bind GTP.

Belongs to the adenylosuccinate synthetase family. Homodimer. Mg(2+) serves as cofactor.

It is found in the cytoplasm. The enzyme catalyses IMP + L-aspartate + GTP = N(6)-(1,2-dicarboxyethyl)-AMP + GDP + phosphate + 2 H(+). The protein operates within purine metabolism; AMP biosynthesis via de novo pathway; AMP from IMP: step 1/2. Plays an important role in the de novo pathway of purine nucleotide biosynthesis. Catalyzes the first committed step in the biosynthesis of AMP from IMP. This is Adenylosuccinate synthetase from Francisella tularensis subsp. novicida (strain U112).